A 345-amino-acid chain; its full sequence is Uroporphyrinogen decarboxylase (345 aa).

Substrate contacts are provided by residues 27–31, phenylalanine 46, aspartate 76, tyrosine 152, serine 207, and histidine 321; that span reads RQAGR.

It belongs to the uroporphyrinogen decarboxylase family. In terms of assembly, homodimer.

The protein resides in the cytoplasm. The catalysed reaction is uroporphyrinogen III + 4 H(+) = coproporphyrinogen III + 4 CO2. It functions in the pathway porphyrin-containing compound metabolism; protoporphyrin-IX biosynthesis; coproporphyrinogen-III from 5-aminolevulinate: step 4/4. Functionally, catalyzes the decarboxylation of four acetate groups of uroporphyrinogen-III to yield coproporphyrinogen-III. This is Uroporphyrinogen decarboxylase from Staphylococcus aureus (strain bovine RF122 / ET3-1).